The primary structure comprises 252 residues: MLSVKSIPAFNDNYIWLIHNNDNHCVVVDPGDATPVLECIKEHDFILDAILITHHHHDHIGGVPELVRQFPSVNVVGPENEPIPTLTHPVGDGDFVELFDEQFMVLGVPGHTNGHVAYVGDEKLFCGDALFSAGCGRLFEGTAEQMFNSLQKMAALPDETEVYCAHEYTASNLAFALAVEPDNDYLLRYREKVLHLRAHGKSTIPSTLQREKLINPFLRTSEANVKKSVASKVQDSTEVEIFTALRRWKDEF.

Residues H54, H56, D58, H59, H111, D128, and H166 each coordinate Zn(2+).

It belongs to the metallo-beta-lactamase superfamily. Glyoxalase II family. As to quaternary structure, monomer. Zn(2+) serves as cofactor.

It catalyses the reaction an S-(2-hydroxyacyl)glutathione + H2O = a 2-hydroxy carboxylate + glutathione + H(+). The protein operates within secondary metabolite metabolism; methylglyoxal degradation; (R)-lactate from methylglyoxal: step 2/2. Thiolesterase that catalyzes the hydrolysis of S-D-lactoyl-glutathione to form glutathione and D-lactic acid. This Aliivibrio fischeri (strain MJ11) (Vibrio fischeri) protein is Hydroxyacylglutathione hydrolase.